Consider the following 192-residue polypeptide: Probable nicotinate-nucleotide adenylyltransferase (192 aa).

The protein belongs to the NadD family.

It carries out the reaction nicotinate beta-D-ribonucleotide + ATP + H(+) = deamido-NAD(+) + diphosphate. Its pathway is cofactor biosynthesis; NAD(+) biosynthesis; deamido-NAD(+) from nicotinate D-ribonucleotide: step 1/1. In terms of biological role, catalyzes the reversible adenylation of nicotinate mononucleotide (NaMN) to nicotinic acid adenine dinucleotide (NaAD). The polypeptide is Probable nicotinate-nucleotide adenylyltransferase (Shouchella clausii (strain KSM-K16) (Alkalihalobacillus clausii)).